Consider the following 370-residue polypeptide: Protein-tyrosine sulfotransferase 1 (370 aa).

The Cytoplasmic portion of the chain corresponds to 1-8 (MVGKLKQN). Residues 9–25 (LLLACLVISSVTVFYLG) form a helical; Signal-anchor for type II membrane protein membrane-spanning segment. The Lumenal portion of the chain corresponds to 26-370 (QHAMECHHRI…KEKPQTEQVE (345 aa)). Asn-60 carries N-linked (GlcNAc...) asparagine glycosylation. A 3'-phosphoadenylyl sulfate-binding site is contributed by 79-83 (RSGTT). A disulfide bridge links Cys-97 with Cys-157. Glu-100 acts as the Proton donor/acceptor in catalysis. Residues 102-106 (RVIPR) are interaction with peptide substrate. 3 residues coordinate 3'-phosphoadenylyl sulfate: Arg-184, Ser-192, and Arg-196. Cys-226 and Cys-234 are disulfide-bonded. Position 239 (Tyr-239) interacts with 3'-phosphoadenylyl sulfate. N-linked (GlcNAc...) asparagine glycosylation occurs at Asn-262. 3'-phosphoadenylyl sulfate is bound by residues 286–295 (STDQVIKPVN) and Lys-301.

The protein belongs to the protein sulfotransferase family. Homodimer. Can also form heterodimers with TPST2. N-glycosylated.

It is found in the golgi apparatus membrane. The catalysed reaction is L-tyrosyl-[protein] + 3'-phosphoadenylyl sulfate = O-sulfo-L-tyrosine-[protein] + adenosine 3',5'-bisphosphate + H(+). Catalyzes the O-sulfation of tyrosine residues within acidic motifs of polypeptides, using 3'-phosphoadenylyl sulfate (PAPS) as cosubstrate. The sequence is that of Protein-tyrosine sulfotransferase 1 (Tpst1) from Rattus norvegicus (Rat).